The following is a 365-amino-acid chain: Aminomethyltransferase (365 aa).

It belongs to the GcvT family. In terms of assembly, the glycine cleavage system is composed of four proteins: P, T, L and H.

The catalysed reaction is N(6)-[(R)-S(8)-aminomethyldihydrolipoyl]-L-lysyl-[protein] + (6S)-5,6,7,8-tetrahydrofolate = N(6)-[(R)-dihydrolipoyl]-L-lysyl-[protein] + (6R)-5,10-methylene-5,6,7,8-tetrahydrofolate + NH4(+). Functionally, the glycine cleavage system catalyzes the degradation of glycine. The sequence is that of Aminomethyltransferase from Desulfitobacterium hafniense (strain Y51).